The chain runs to 369 residues: MKPMSYWDYIKVEELLALQGGANGDETQVGNDEALFIVVHQVYELWFKLILRELTFARDLLRQDTVPGHQIALGVRSLRRAIAVFEQANQHFRVMETMTARDFLDFRERLMPASGFQSAQLREIEILLGLEDNERIAVCQGGSFKDALKLPNGALSSAAYRVEAREAHGQSLKHCLYAWLSRIPIDGSNEPAAVKRFLRDYIGSVRAESQRRLQTAIDRQLAPAEVERLRARYQADDVGAETFLLAEEDPQADAMTREKRRAVRAAMLFVESYRELPQLAWPRELLESILELEQSMLIWRQRHARMVERIIGRRVGTGGSSGVDYLDQTALRYRVFTDLWTVRSLLLRKSSVPPIRQGASYAFAEEALV.

Residues 36 to 40 and R107 contribute to the substrate site; that span reads FIVVH. Residue H303 coordinates heme. T317 serves as a coordination point for substrate.

Belongs to the tryptophan 2,3-dioxygenase family. Homotetramer. Requires heme as cofactor.

The enzyme catalyses L-tryptophan + O2 = N-formyl-L-kynurenine. It functions in the pathway amino-acid degradation; L-tryptophan degradation via kynurenine pathway; L-kynurenine from L-tryptophan: step 1/2. In terms of biological role, heme-dependent dioxygenase that catalyzes the oxidative cleavage of the L-tryptophan (L-Trp) pyrrole ring and converts L-tryptophan to N-formyl-L-kynurenine. Catalyzes the oxidative cleavage of the indole moiety. This is Tryptophan 2,3-dioxygenase 2 from Ralstonia nicotianae (strain ATCC BAA-1114 / GMI1000) (Ralstonia solanacearum).